The sequence spans 626 residues: DNA mismatch repair protein MutL (626 aa).

This sequence belongs to the DNA mismatch repair MutL/HexB family.

This protein is involved in the repair of mismatches in DNA. It is required for dam-dependent methyl-directed DNA mismatch repair. May act as a 'molecular matchmaker', a protein that promotes the formation of a stable complex between two or more DNA-binding proteins in an ATP-dependent manner without itself being part of a final effector complex. The polypeptide is DNA mismatch repair protein MutL (Cellvibrio japonicus (strain Ueda107) (Pseudomonas fluorescens subsp. cellulosa)).